Here is a 156-residue protein sequence, read N- to C-terminus: Putative pre-16S rRNA nuclease (156 aa).

This sequence belongs to the YqgF nuclease family.

It is found in the cytoplasm. Functionally, could be a nuclease involved in processing of the 5'-end of pre-16S rRNA. In Aromatoleum aromaticum (strain DSM 19018 / LMG 30748 / EbN1) (Azoarcus sp. (strain EbN1)), this protein is Putative pre-16S rRNA nuclease.